The chain runs to 644 residues: Exoribonuclease 2 (644 aa).

The 328-residue stretch at 189 to 516 folds into the RNB domain; that stretch reads RQDLTALNFV…NHRLLKAVIK (328 aa). In terms of domain architecture, S1 motif spans 561 to 643; sequence DTRFAAEIID…DTRSIIARPA (83 aa).

It belongs to the RNR ribonuclease family. RNase II subfamily.

The protein resides in the cytoplasm. The catalysed reaction is Exonucleolytic cleavage in the 3'- to 5'-direction to yield nucleoside 5'-phosphates.. Its function is as follows. Involved in mRNA degradation. Hydrolyzes single-stranded polyribonucleotides processively in the 3' to 5' direction. This Salmonella arizonae (strain ATCC BAA-731 / CDC346-86 / RSK2980) protein is Exoribonuclease 2.